The primary structure comprises 230 residues: Ly6/PLAUR domain-containing protein 8 (230 aa).

An N-terminal signal peptide occupies residues 1–20 (MKSFLFAGIVVVLTVAAVDT). 13 N-linked (GlcNAc...) asparagine glycosylation sites follow: Asn-37, Asn-44, Asn-74, Asn-77, Asn-90, Asn-106, Asn-110, Asn-132, Asn-137, Asn-156, Asn-168, Asn-181, and Asn-197. Residues 125 to 172 (CPACYGNNETSCNETRKCYGERCVSIIAEFTNETKTLVLKGCSNVSIS) enclose the UPAR/Ly6 domain. A lipid anchor (GPI-anchor amidated serine) is attached at Ser-211. Residues 212-230 (QASFTPLALASILLLSLLL) constitute a propeptide, removed in mature form.

This sequence belongs to the CNF-like-inhibitor family. Highly N-glycosylated. Not O-glycosylated. Post-translationally, GPI-anchored. The GPI-anchor is cleaved, leading to secretion into the colonic lumen.

It localises to the cell membrane. It is found in the secreted. Its function is as follows. Secreted protein specifically required to prevent invasion of Gram-negative bacteria in the inner mucus layer of the colon epithelium, a portion of the large intestine which is free of commensal microbiota. Prevents invasion of flagellated microbiota by binding to the flagellum of bacteria, such as P.mirabilis, thereby inhibiting bacterial motility in the intestinal lumen. Segregation of intestinal bacteria and epithelial cells in the colon is required to preserve intestinal homeostasis. The polypeptide is Ly6/PLAUR domain-containing protein 8 (LYPD8) (Bos taurus (Bovine)).